A 355-amino-acid polypeptide reads, in one-letter code: MKIRIDIPHHPYDIQIEKGCLAQAGQWLRELWQPQKVVIVTDNHVASLYAEKVKLSLEDAGFQVAVFDFLEGEERKNLTTVQKVYEFLVKQGLTRSDGIVALGGGVVGDLAGFVASTYMRGIHFVQIPTSLTAQVDSSIGGKTGVNTPFAKNMVGTFAQPDGVLIDPLVLETLGKRELIEGMGEVIKYGLIEDPELWALLTELDGSVESILEHAETLIEHSCQVKRKMVVEDELDNGVRLYLNFGHTIGHAIEATAGYGKVMHGEAVAMGMVQISKVAEKKGLMPAGITQSITDMCQKFGLPVDYENWDVDKLYQALTHDKKARGNTLKLVLVPELGSATIHPVSLEEMKDYLVK.

NAD(+) contacts are provided by residues 71 to 76 (EGEERK), 105 to 109 (GVVGD), 129 to 130 (TS), Lys142, and Lys151. Residues Glu184, His246, and His263 each coordinate Zn(2+).

This sequence belongs to the sugar phosphate cyclases superfamily. Dehydroquinate synthase family. Co(2+) is required as a cofactor. Zn(2+) serves as cofactor. Requires NAD(+) as cofactor.

It is found in the cytoplasm. The enzyme catalyses 7-phospho-2-dehydro-3-deoxy-D-arabino-heptonate = 3-dehydroquinate + phosphate. It participates in metabolic intermediate biosynthesis; chorismate biosynthesis; chorismate from D-erythrose 4-phosphate and phosphoenolpyruvate: step 2/7. Functionally, catalyzes the conversion of 3-deoxy-D-arabino-heptulosonate 7-phosphate (DAHP) to dehydroquinate (DHQ). The chain is 3-dehydroquinate synthase from Streptococcus pneumoniae (strain ATCC 700669 / Spain 23F-1).